The primary structure comprises 600 residues: CBP80/20-dependent translation initiation factor (600 aa).

At M1 the chain carries N-acetylmethionine. A compositionally biased stretch (low complexity) spans 1–18 (MENSSAASASSEAGSSRS). 4 disordered regions span residues 1–20 (MENSSAASASSEAGSSRSQE), 43–62 (DKTEGDGESQRTQSHISQWT), 134–154 (KQPLPHIDREGCGKGKLEDGD), and 175–370 (PHEA…SSPQ). The segment at 1-305 (MENSSAASAS…PPCSPDTLTP (305 aa)) is interaction with NCBP1/CBP80. The residue at position 18 (S18) is a Phosphoserine. A compositionally biased stretch (polar residues) spans 52–62 (QRTQSHISQWT). The span at 139–152 (HIDREGCGKGKLED) shows a compositional bias: basic and acidic residues. Positions 183-198 (TKKLFRRRRNDRRRQQ) are enriched in basic residues. Residues 258 to 272 (PPGDKGEAGSHRNAK) are compositionally biased toward basic and acidic residues. Position 289 is a phosphothreonine (T289). At S299 the chain carries Phosphoserine. Basic and acidic residues predominate over residues 321–339 (AEIKHKDTVLPERLRERPK). Positions 378–579 (MEILNIMRNN…LEVIELHANS (202 aa)) constitute an MIF4G domain.

It belongs to the CTIF family. Interacts with NCBP1/CBP80; the interaction is direct. Associates with the eukaryotic translation initiation factor 3 (eIF-3) complex. As to expression, widely expressed.

The protein resides in the cytoplasm. Its subcellular location is the perinuclear region. Its function is as follows. Specifically required for the pioneer round of mRNA translation mediated by the cap-binding complex (CBC), that takes place during or right after mRNA export via the nuclear pore complex (NPC). Acts via its interaction with the NCBP1/CBP80 component of the CBC complex and recruits the 40S small subunit of the ribosome via eIF3. In contrast, it is not involved in steady state translation, that takes place when the CBC complex is replaced by cytoplasmic cap-binding protein eIF4E. Also required for nonsense-mediated mRNA decay (NMD), the pioneer round of mRNA translation mediated by the cap-binding complex playing a central role in nonsense-mediated mRNA decay (NMD). The sequence is that of CBP80/20-dependent translation initiation factor (Ctif) from Mus musculus (Mouse).